Here is a 465-residue protein sequence, read N- to C-terminus: UDP-N-acetylmuramate--L-alanine ligase (465 aa).

112 to 118 (GTHGKTT) is an ATP binding site.

The protein belongs to the MurCDEF family.

It is found in the cytoplasm. It carries out the reaction UDP-N-acetyl-alpha-D-muramate + L-alanine + ATP = UDP-N-acetyl-alpha-D-muramoyl-L-alanine + ADP + phosphate + H(+). The protein operates within cell wall biogenesis; peptidoglycan biosynthesis. Cell wall formation. The chain is UDP-N-acetylmuramate--L-alanine ligase from Burkholderia thailandensis (strain ATCC 700388 / DSM 13276 / CCUG 48851 / CIP 106301 / E264).